The following is a 488-amino-acid chain: Glutamyl-tRNA(Gln) amidotransferase subunit A (488 aa).

Residues Lys-77 and Ser-152 each act as charge relay system in the active site. The active-site Acyl-ester intermediate is Ser-176.

This sequence belongs to the amidase family. GatA subfamily. As to quaternary structure, heterotrimer of A, B and C subunits.

The catalysed reaction is L-glutamyl-tRNA(Gln) + L-glutamine + ATP + H2O = L-glutaminyl-tRNA(Gln) + L-glutamate + ADP + phosphate + H(+). In terms of biological role, allows the formation of correctly charged Gln-tRNA(Gln) through the transamidation of misacylated Glu-tRNA(Gln) in organisms which lack glutaminyl-tRNA synthetase. The reaction takes place in the presence of glutamine and ATP through an activated gamma-phospho-Glu-tRNA(Gln). The polypeptide is Glutamyl-tRNA(Gln) amidotransferase subunit A (Streptococcus pyogenes serotype M18 (strain MGAS8232)).